The following is a 90-amino-acid chain: Iron oxidase (90 aa).

A signal peptide (tat-type signal) is located at residues M1–A37. [4Fe-4S] cluster-binding residues include C57, C60, C69, and C82.

It belongs to the high-potential iron-sulfur protein (HiPIP) family. In terms of assembly, homomultimer. Predicted to be exported by the Tat system. The position of the signal peptide cleavage has been experimentally proven.

It is found in the periplasm. In terms of biological role, catalyzes the oxidation of Fe(2+) to Fe(3+) coupled to cytochrome c552 reduction. This Acidithiobacillus ferrooxidans (Thiobacillus ferrooxidans) protein is Iron oxidase (iro).